The chain runs to 247 residues: PABIR family member 2 (247 aa).

The interval 1–23 (MAQEKMELDLEPDTSYGGTLRRS) is disordered. Ala-2 carries the post-translational modification N-acetylalanine. 5 positions are modified to phosphoserine: Ser-25, Ser-33, Ser-50, Ser-58, and Leu-63. Residues 82–104 (ISQSWDESLSLSDSDFDKPEKLY) form a disordered region. The span at 83 to 94 (SQSWDESLSLSD) shows a compositional bias: low complexity. Thr-112 bears the Phosphothreonine mark. Phosphoserine is present on residues Ser-115 and Ser-119. Arg-122 is modified (omega-N-methylarginine). Disordered regions lie at residues 129–152 (VSSSGLPPSPVPSPRRFSRRSQSP), 158–177 (PSVLGPLKRKGEMETESQPK), and 202–230 (DILDGSSSSSGLSSDPLAKGSATAESPVA). 2 positions are modified to phosphoserine: Ser-137 and Ser-141. Residues 166–176 (RKGEMETESQP) show a composition bias toward basic and acidic residues. The segment covering 202–216 (DILDGSSSSSGLSSD) has biased composition (low complexity).

It belongs to the FAM122 family. Post-translationally, isoform 3 and isoform 4 are phosphorylated on Ser-62 and Ser-64.

This is PABIR family member 2 from Homo sapiens (Human).